A 111-amino-acid chain; its full sequence is Wound-induced proteinase inhibitor 1 (111 aa).

The signal sequence occupies residues 1-23 (MESKFAHIIVFFLLATSFETLMA). Positions 24 to 36 (RKEIDGPEVIELL) are excised as a propeptide.

The protein belongs to the protease inhibitor I13 (potato type I serine protease inhibitor) family.

Its subcellular location is the secreted. This Solanum lycopersicum (Tomato) protein is Wound-induced proteinase inhibitor 1 (PIIF).